A 514-amino-acid polypeptide reads, in one-letter code: Na(+)/H(+) antiporter NhaB (514 aa).

The next 12 helical transmembrane spans lie at 23–43, 52–72, 97–117, 120–140, 144–164, 202–222, 238–258, 303–323, 353–373, 391–411, 447–467, and 475–495; these read LALL…PFIA, IFTL…LLAI, LLLM…LFIF, LLLS…AAAF, FLDA…FYGI, LMMH…VGEP, FFLR…LTCL, ALIG…VGLI, FTAL…QSLF, LFYL…VGTI, ATPN…APLI, and VWMA…CVEF.

The protein belongs to the NhaB Na(+)/H(+) (TC 2.A.34) antiporter family.

The protein localises to the cell inner membrane. The enzyme catalyses 2 Na(+)(in) + 3 H(+)(out) = 2 Na(+)(out) + 3 H(+)(in). In terms of biological role, na(+)/H(+) antiporter that extrudes sodium in exchange for external protons. This chain is Na(+)/H(+) antiporter NhaB, found in Escherichia fergusonii (strain ATCC 35469 / DSM 13698 / CCUG 18766 / IAM 14443 / JCM 21226 / LMG 7866 / NBRC 102419 / NCTC 12128 / CDC 0568-73).